The primary structure comprises 443 residues: Thymidine phosphorylase (443 aa).

This sequence belongs to the thymidine/pyrimidine-nucleoside phosphorylase family. In terms of assembly, homodimer.

The enzyme catalyses thymidine + phosphate = 2-deoxy-alpha-D-ribose 1-phosphate + thymine. It participates in pyrimidine metabolism; dTMP biosynthesis via salvage pathway; dTMP from thymine: step 1/2. Functionally, the enzymes which catalyze the reversible phosphorolysis of pyrimidine nucleosides are involved in the degradation of these compounds and in their utilization as carbon and energy sources, or in the rescue of pyrimidine bases for nucleotide synthesis. This is Thymidine phosphorylase from Aeromonas hydrophila subsp. hydrophila (strain ATCC 7966 / DSM 30187 / BCRC 13018 / CCUG 14551 / JCM 1027 / KCTC 2358 / NCIMB 9240 / NCTC 8049).